We begin with the raw amino-acid sequence, 111 residues long: Gene 81 protein (111 aa).

This is Gene 81 protein (81) from Mycobacterium (Mycobacteriophage L5).